The sequence spans 346 residues: Heterogeneous nuclear ribonucleoprotein A1 (346 aa).

RRM domains are found at residues 23-123 and 114-191; these read RKIF…GVRE and KRLY…KGLS. 2 stretches are compositionally biased toward basic and acidic residues: residues 92 to 107 and 189 to 215; these read TVDP…KNRS and GLSK…RDGQ. 2 disordered regions span residues 92 to 111 and 189 to 346; these read TVDP…ESNV and GLSK…NRNY. Composition is skewed to gly residues over residues 216-296 and 303-331; these read RGGY…GWGG and GGWG…GGQS. Residues 332-346 are compositionally biased toward low complexity; it reads GAQQWAHAQGGNRNY.

It is found in the nucleus. Its subcellular location is the chromosome. It localises to the telomere. This protein is a component of ribonucleosomes. Overexpression gradually increases telomere length, leading to increase lifespan. This chain is Heterogeneous nuclear ribonucleoprotein A1, found in Caenorhabditis elegans.